Reading from the N-terminus, the 73-residue chain is Venom protein 55.1 (73 aa).

Positions 1–19 (MNFLCILFVVSLISSLSKC) are cleaved as a signal peptide. P57 carries the post-translational modification Proline amide. The propeptide occupies 61-73 (RRSFDLYALVNAK).

The protein belongs to the diuretic hormone class 2 family. Expressed by the venom gland.

It is found in the secreted. Functionally, regulates fluid secretion. The chain is Venom protein 55.1 from Lychas mucronatus (Chinese swimming scorpion).